The sequence spans 167 residues: Small ribosomal subunit protein uS5 (167 aa).

An S5 DRBM domain is found at 11 to 74; it reads LQEKLIAVNR…EKARRNMINV (64 aa).

Belongs to the universal ribosomal protein uS5 family. As to quaternary structure, part of the 30S ribosomal subunit. Contacts proteins S4 and S8.

With S4 and S12 plays an important role in translational accuracy. Its function is as follows. Located at the back of the 30S subunit body where it stabilizes the conformation of the head with respect to the body. The protein is Small ribosomal subunit protein uS5 of Klebsiella pneumoniae subsp. pneumoniae (strain ATCC 700721 / MGH 78578).